The chain runs to 64 residues: PYLa/PGLa B (64 aa).

The first 20 residues, 1–20 (MYKQIFLCLIIAALCATIMA), serve as a signal peptide directing secretion. A propeptide spanning residues 21-35 (EASALADADDDDDKR) is cleaved from the precursor. Leu59 is subject to Leucine amide. Positions 60–64 (GRRDS) are excised as a propeptide.

Belongs to the gastrin/cholecystokinin family. Magainin subfamily. In terms of tissue distribution, expressed by the skin glands. Synthesized in the stomach and stored in a novel granular multinucleated cell in the gastric mucosa. Stored as active, processed peptides in large granules within the granular gland secretions of the skin.

Its subcellular location is the secreted. Functionally, PGLa and PGLa-H display a broad-spectrum of antibacterial activity against a range of Gram-positive and Gram-negative bacteria. PGLa also displays antifungal activity against C.albicans ATCC 14053. PGLa-H shows moderate antibacterial activity against the multidrug-resistant methicillin-resistant S.aureus (MRSA) but exhibits very little hemolytic activity. The polypeptide is PYLa/PGLa B (pgla-b) (Xenopus laevis (African clawed frog)).